A 330-amino-acid chain; its full sequence is Delta-aminolevulinic acid dehydratase (330 aa).

Residues Cys122, Cys124, His131, and Cys132 each coordinate Zn(2+). Lys199 serves as the catalytic Schiff-base intermediate with substrate. Lys199 is subject to N6-succinyllysine. Residue Arg209 participates in 5-aminolevulinate binding. Ser215 is subject to Phosphoserine. Residue Arg221 participates in 5-aminolevulinate binding. Cys223 serves as a coordination point for Zn(2+). Lys252 functions as the Schiff-base intermediate with substrate in the catalytic mechanism. Lys252 carries the N6-succinyllysine modification. 5-aminolevulinate is bound by residues Ser279 and Tyr318.

Belongs to the ALAD family. Homooctamer; active form. Homohexamer; low activity form. Zn(2+) is required as a cofactor.

It localises to the cytoplasm. Its subcellular location is the cytosol. It catalyses the reaction 2 5-aminolevulinate = porphobilinogen + 2 H2O + H(+). Its pathway is porphyrin-containing compound metabolism; protoporphyrin-IX biosynthesis; coproporphyrinogen-III from 5-aminolevulinate: step 1/4. With respect to regulation, can alternate between a fully active homooctamer and a low-activity homohexamer. A bound magnesium ion may promote the assembly of the fully active homooctamer. The magnesium-binding site is absent in the low-activity homohexamer. Inhibited by compounds that favor the hexameric state. Inhibited by divalent lead ions. The lead ions partially displace the zinc cofactor. In terms of biological role, catalyzes an early step in the biosynthesis of tetrapyrroles. Binds two molecules of 5-aminolevulinate per subunit, each at a distinct site, and catalyzes their condensation to form porphobilinogen. The chain is Delta-aminolevulinic acid dehydratase (ALAD) from Macaca fascicularis (Crab-eating macaque).